The primary structure comprises 181 residues: ADP-ribosylation factor 1-like 2 (181 aa).

Glycine 2 carries the N-myristoyl glycine lipid modification. The segment at 3 to 16 (NVFGSLFKGLFGKK) is important for the stable binding to the membranes. GTP is bound by residues 24–32 (GLDAAGKTT), 126–129 (NKQD), and alanine 160.

It belongs to the small GTPase superfamily. Arf family.

Its subcellular location is the golgi apparatus membrane. The enzyme catalyses GTP + H2O = GDP + phosphate + H(+). With respect to regulation, alternates between an inactive GDP-bound form and an active GTP-bound form. Activated by a guanine nucleotide-exchange factor (GEF) and inactivated by GTPase-activating protein (GAP). Functionally, small GTPase involved in protein trafficking between different compartments. Modulates vesicle budding and uncoating within the Golgi complex. In its GTP-bound form, triggers the recruitment of coatomer proteins to the Golgi membrane. The hydrolysis of ARF1-bound GTP, which is mediated by ARFGAPs proteins, is required for dissociation of coat proteins from Golgi membranes and vesicles. Involved in endoplasmic reticulum dynamics during embryogenesis. Also required for adult germline function. Plays a role in cell shedding during embryogenesis probably by promoting the endocytosis of cell adhesion molecules. During neurogenesis, involved in cell autonomous Q.p neuroblast asymmetric divisions that generate one precursor cell and one apoptotic cell, probably by controlling endocytosis. Plays a role in maintaining mitochondrial morphology. The polypeptide is ADP-ribosylation factor 1-like 2 (arf-1.2) (Caenorhabditis briggsae).